The following is a 425-amino-acid chain: Serine hydroxymethyltransferase (425 aa).

(6S)-5,6,7,8-tetrahydrofolate contacts are provided by residues Leu128 and 132–134 (GHL). Lys237 is subject to N6-(pyridoxal phosphate)lysine.

This sequence belongs to the SHMT family. As to quaternary structure, homodimer. Requires pyridoxal 5'-phosphate as cofactor.

The protein resides in the cytoplasm. It carries out the reaction (6R)-5,10-methylene-5,6,7,8-tetrahydrofolate + glycine + H2O = (6S)-5,6,7,8-tetrahydrofolate + L-serine. Its pathway is one-carbon metabolism; tetrahydrofolate interconversion. It functions in the pathway amino-acid biosynthesis; glycine biosynthesis; glycine from L-serine: step 1/1. Catalyzes the reversible interconversion of serine and glycine with tetrahydrofolate (THF) serving as the one-carbon carrier. This reaction serves as the major source of one-carbon groups required for the biosynthesis of purines, thymidylate, methionine, and other important biomolecules. Also exhibits THF-independent aldolase activity toward beta-hydroxyamino acids, producing glycine and aldehydes, via a retro-aldol mechanism. The sequence is that of Serine hydroxymethyltransferase from Wolbachia pipientis subsp. Culex pipiens (strain wPip).